The chain runs to 315 residues: Putative steroid dehydrogenase 3 (315 aa).

47–76 (ASWAVITGGTDGIGKSFSFELAKRGFNIYI) is a binding site for NADP(+). Y202 is a catalytic residue.

This sequence belongs to the short-chain dehydrogenases/reductases (SDR) family. 17-beta-HSD 3 subfamily.

The sequence is that of Putative steroid dehydrogenase 3 (stdh-3) from Caenorhabditis elegans.